Reading from the N-terminus, the 1304-residue chain is Splicing factor 3B subunit 1 (1304 aa).

Disordered stretches follow at residues 100–119 (QYDP…EDEY) and 124–148 (RTMI…PKMN). Positions 104 to 119 (FAEHRPPKIADREDEY) are enriched in basic and acidic residues. Threonine 125 carries the post-translational modification Phosphothreonine. Phosphoserine is present on serine 129. N6-acetyllysine is present on lysine 141. A Phosphothreonine modification is found at threonine 142. Arginine 157 bears the Citrulline mark. A disordered region spans residues 173–360 (AEKAKAGELK…PVLTPGKTPI (188 aa)). The interval 190–342 (SQPPSKRKRR…KRKSRWDETP (153 aa)) is U2AF homology region; mediates interaction with RBM39. Serine 194 carries the post-translational modification Phosphoserine. Phosphothreonine occurs at positions 203, 207, and 211. Lysine 214 is subject to N6-acetyllysine; alternate. Lysine 214 participates in a covalent cross-link: Glycyl lysine isopeptide (Lys-Gly) (interchain with G-Cter in SUMO2); alternate. Residues threonine 223 and threonine 227 each carry the phosphothreonine modification. The segment at 223-491 (TPGHTPSLRW…VDESTLSPEE (269 aa)) is interaction with PPP1R8. Residue serine 229 is modified to Phosphoserine. Over residues 231–241 (RWDETPGRAKG) the composition is skewed to basic and acidic residues. A phosphothreonine mark is found at threonine 235, threonine 244, threonine 248, threonine 257, threonine 261, threonine 267, threonine 273, and threonine 278. Serine 287 is subject to Phosphoserine. Over residues 291 to 304 (NRWDETPKTERDTP) the composition is skewed to basic and acidic residues. Residues threonine 296, threonine 299, threonine 303, and threonine 313 each carry the phosphothreonine modification. Serine 322 bears the Phosphoserine mark. Phosphothreonine is present on residues threonine 326 and threonine 328. Serine 332 carries the phosphoserine modification. Threonine 341 carries the phosphothreonine modification. Positions 342-352 (PASQMGGSTPV) are enriched in polar residues. Phosphoserine occurs at positions 344 and 349. Residues threonine 350 and threonine 354 each carry the phosphothreonine modification. Position 400 is a phosphoserine (serine 400). Residue lysine 413 forms a Glycyl lysine isopeptide (Lys-Gly) (interchain with G-Cter in SUMO2); alternate linkage. Lysine 413 participates in a covalent cross-link: Glycyl lysine isopeptide (Lys-Gly) (interchain with G-Cter in SUMO1); alternate. The residue at position 426 (threonine 426) is a Phosphothreonine. Residue lysine 430 forms a Glycyl lysine isopeptide (Lys-Gly) (interchain with G-Cter in SUMO2) linkage. The residue at position 434 (threonine 434) is a Phosphothreonine; by DYRK1A. Residue threonine 436 is modified to Phosphothreonine. Phosphoserine is present on serine 488. HEAT repeat units follow at residues 529–568 (GPLF…DLVR), 569–603 (PYVH…LAKA), 604–641 (AGLA…ALGI), 643–677 (SLLP…LMGC), 680–718 (LPHL…AATP), 763–801 (NYYT…TDGV), 843–881 (KVGA…NLGA), 1010–1048 (TPPI…RGAE), 1052–1090 (AREW…AIGP), 1122–1160 (TCSP…YIGE), and 1163–1201 (KDYI…GVYG). The interval 529–568 (GPLFNQILPLLMSPTLEDQERHLLVKVIDRILYKLDDLVR) is interaction with SF3B14. The interaction with PHF5A stretch occupies residues 547 to 550 (QERH). An N6-acetyllysine mark is found at lysine 554 and lysine 562. The interval 1156-1157 (EY) is interaction with PHF5A. Residues 1248 to 1304 (QYCLQGLFHPARKVRDVYWKIYNSIYIGSQDALIAHYPRIYNDDKNTYIRYELDYIL) are interaction with SF3B3 and SF3B5.

The protein belongs to the SF3B1 family. Component of the 17S U2 SnRNP complex, a ribonucleoprotein complex that contains small nuclear RNA (snRNA) U2 and a number of specific proteins. Part of the SF3B subcomplex of the 17S U2 SnRNP complex. SF3B associates with the splicing subcomplex SF3A and a 12S RNA unit to form the U2 small nuclear ribonucleoproteins complex (U2 snRNP). Within the SF3B complex, interacts directly (via HEAT domain) with SF3B3, SF3B5, SF3B6 and (via HEAT domain) with PHF5A. The SF3B subcomplex interacts with U2AF2. Identified in the spliceosome C complex. Component of the minor (U12-type spliceosome) spliceosome. Within the minor spliceosome complex, interacts with SCNM1 and CRIPT. Component of the B-WICH complex, at least composed of SMARCA5/SNF2H, BAZ1B/WSTF, SF3B1, DEK, MYO1C, ERCC6, MYBBP1A and DDX21. Phosphorylated form interacts with PPP1R8. Interacts with PQBP1. Interacts with RBM17. Interacts with RBM39. Interacts with SETX. Interacts with RBM15. Interacts with USH1G. Interacts with SDE2. Interacts with U2AF1. Interacts with CACTIN. Interacts with ZRSR1. Interacts with CYREN. Post-translationally, phosphorylated. Phosphorylation occurs concomitantly with the splicing catalytic steps. Phosphorylation on Thr-244, Thr-248 and Thr-313 by cyclin-dependent kinases promotes interaction with PPP1R8 during mitosis. Citrullinated by PADI4.

The protein resides in the nucleus. The protein localises to the nucleus speckle. In terms of biological role, component of the 17S U2 SnRNP complex of the spliceosome, a large ribonucleoprotein complex that removes introns from transcribed pre-mRNAs. The 17S U2 SnRNP complex (1) directly participates in early spliceosome assembly and (2) mediates recognition of the intron branch site during pre-mRNA splicing by promoting the selection of the pre-mRNA branch-site adenosine, the nucleophile for the first step of splicing. Within the 17S U2 SnRNP complex, SF3B1 is part of the SF3B subcomplex, which is required for 'A' complex assembly formed by the stable binding of U2 snRNP to the branchpoint sequence in pre-mRNA. Sequence independent binding of SF3A and SF3B subcomplexes upstream of the branch site is essential, it may anchor U2 snRNP to the pre-mRNA. May also be involved in the assembly of the 'E' complex. Also acts as a component of the minor spliceosome, which is involved in the splicing of U12-type introns in pre-mRNAs. Together with other U2 snRNP complex components may also play a role in the selective processing of microRNAs (miRNAs) from the long primary miRNA transcript, pri-miR-17-92. The polypeptide is Splicing factor 3B subunit 1 (Homo sapiens (Human)).